The chain runs to 113 residues: Crustacean hyperglycemic hormones B (113 aa).

The signal sequence occupies residues 1–26; that stretch reads MVAFRMMSMALLVVVASSWWASPVEA. 3 disulfides stabilise this stretch: Cys46/Cys82, Cys62/Cys78, and Cys65/Cys91. Val111 carries the valine amide modification.

It belongs to the arthropod CHH/MIH/GIH/VIH hormone family. Expressed at a constant level in the eyestalks of juveniles and mature females. A low level expression is seen in the central nervous system.

The protein localises to the secreted. In terms of biological role, hormone found in the sinus gland of isopods and decapods which controls the blood sugar level. Has a secretagogue action over the amylase released from the midgut gland. May act as a stress hormone and may be involved in the control of molting and reproduction. The protein is Crustacean hyperglycemic hormones B of Metapenaeus ensis (Greasyback shrimp).